A 942-amino-acid chain; its full sequence is Ubiquitin carboxyl-terminal hydrolase 33 (942 aa).

Residues 37–140 form a UBP-type zinc finger; it reads NHCPHLDSVG…PSLPHVRQPH (104 aa). Residues Cys-39, His-41, Cys-61, Cys-64, Cys-74, Cys-79, Cys-84, His-91, His-95, His-101, Cys-114, and Cys-117 each contribute to the Zn(2+) site. A USP domain is found at 185–715; it reads TGLKNIGNTC…EAYVLFYRKS (531 aa). Cys-194 acts as the Nucleophile in catalysis. The tract at residues 294–357 is disordered; that stretch reads VEEDPQTITT…MLIQDDENNS (64 aa). Positions 315–327 are enriched in polar residues; sequence DVDFQSCESCSNS. Ser-377 is subject to Phosphoserine. The segment covering 419-431 has biased composition (polar residues); the sequence is DLSTPQILPSNEG. The disordered stretch occupies residues 419–469; it reads DLSTPQILPSNEGVNPRLSASPPKSGNLWPGLAPPHKKAQSASPKRKKQHK. At Ser-439 the chain carries Phosphoserine. Residues 453-469 are compositionally biased toward basic residues; sequence PHKKAQSASPKRKKQHK. His-673 functions as the Proton acceptor in the catalytic mechanism. 2 consecutive DUSP domains span residues 717–810 and 818–921; these read EEAQ…LYIC and EKIE…RPPV.

It belongs to the peptidase C19 family. USP20/USP33 subfamily. Interacts with VHL, leading to its ubiquitination and subsequent degradation. Interacts with ARRB1 and ARRB2. Interacts with ADRB2. Interacts with DIO2. Interacts with ROBO1. Interacts with SELENBP1; in a selenium-dependent manner. Interacts with CCP110. Post-translationally, ubiquitinated via a VHL-dependent pathway for proteasomal degradation. As to expression, widely expressed.

The protein localises to the cytoplasm. It localises to the perinuclear region. The protein resides in the cytoskeleton. Its subcellular location is the microtubule organizing center. It is found in the centrosome. The protein localises to the golgi apparatus. The catalysed reaction is Thiol-dependent hydrolysis of ester, thioester, amide, peptide and isopeptide bonds formed by the C-terminal Gly of ubiquitin (a 76-residue protein attached to proteins as an intracellular targeting signal).. Its function is as follows. Deubiquitinating enzyme involved in various processes such as centrosome duplication, cellular migration and beta-2 adrenergic receptor/ADRB2 recycling. Involved in regulation of centrosome duplication by mediating deubiquitination of CCP110 in S and G2/M phase, leading to stabilize CCP110 during the period which centrioles duplicate and elongate. Involved in cell migration via its interaction with intracellular domain of ROBO1, leading to regulate the Slit signaling. Plays a role in commissural axon guidance cross the ventral midline of the neural tube in a Slit-dependent manner, possibly by mediating the deubiquitination of ROBO1. Acts as a regulator of G-protein coupled receptor (GPCR) signaling by mediating the deubiquitination of beta-arrestins (ARRB1 and ARRB2) and beta-2 adrenergic receptor (ADRB2). Plays a central role in ADRB2 recycling and resensitization after prolonged agonist stimulation by constitutively binding ADRB2, mediating deubiquitination of ADRB2 and inhibiting lysosomal trafficking of ADRB2. Upon dissociation, it is probably transferred to the translocated beta-arrestins, leading to beta-arrestins deubiquitination and disengagement from ADRB2. This suggests the existence of a dynamic exchange between the ADRB2 and beta-arrestins. Deubiquitinates DIO2, thereby regulating thyroid hormone regulation. Mediates deubiquitination of both 'Lys-48'- and 'Lys-63'-linked polyubiquitin chains. The protein is Ubiquitin carboxyl-terminal hydrolase 33 (USP33) of Homo sapiens (Human).